The primary structure comprises 359 residues: Membrane-bound lytic murein transglycosylase C (359 aa).

An N-terminal signal peptide occupies residues methionine 1–serine 16. The N-palmitoyl cysteine moiety is linked to residue cysteine 17. Cysteine 17 carries S-diacylglycerol cysteine lipidation.

This sequence belongs to the transglycosylase Slt family.

It localises to the cell outer membrane. It catalyses the reaction Exolytic cleavage of the (1-&gt;4)-beta-glycosidic linkage between N-acetylmuramic acid (MurNAc) and N-acetylglucosamine (GlcNAc) residues in peptidoglycan, from either the reducing or the non-reducing ends of the peptidoglycan chains, with concomitant formation of a 1,6-anhydrobond in the MurNAc residue.. Murein-degrading enzyme. May play a role in recycling of muropeptides during cell elongation and/or cell division. The sequence is that of Membrane-bound lytic murein transglycosylase C from Escherichia coli O139:H28 (strain E24377A / ETEC).